The following is a 192-amino-acid chain: Imidazoleglycerol-phosphate dehydratase (192 aa).

The protein belongs to the imidazoleglycerol-phosphate dehydratase family.

The protein resides in the cytoplasm. It catalyses the reaction D-erythro-1-(imidazol-4-yl)glycerol 3-phosphate = 3-(imidazol-4-yl)-2-oxopropyl phosphate + H2O. The protein operates within amino-acid biosynthesis; L-histidine biosynthesis; L-histidine from 5-phospho-alpha-D-ribose 1-diphosphate: step 6/9. The chain is Imidazoleglycerol-phosphate dehydratase from Staphylococcus aureus (strain bovine RF122 / ET3-1).